The following is a 129-amino-acid chain: Small ribosomal subunit protein uS11 (129 aa).

This sequence belongs to the universal ribosomal protein uS11 family. Part of the 30S ribosomal subunit. Interacts with proteins S7 and S18. Binds to IF-3.

In terms of biological role, located on the platform of the 30S subunit, it bridges several disparate RNA helices of the 16S rRNA. Forms part of the Shine-Dalgarno cleft in the 70S ribosome. The polypeptide is Small ribosomal subunit protein uS11 (Lactobacillus delbrueckii subsp. bulgaricus (strain ATCC 11842 / DSM 20081 / BCRC 10696 / JCM 1002 / NBRC 13953 / NCIMB 11778 / NCTC 12712 / WDCM 00102 / Lb 14)).